The following is a 204-amino-acid chain: Large ribosomal subunit protein bL25 (204 aa).

This sequence belongs to the bacterial ribosomal protein bL25 family. CTC subfamily. In terms of assembly, part of the 50S ribosomal subunit; part of the 5S rRNA/L5/L18/L25 subcomplex. Contacts the 5S rRNA. Binds to the 5S rRNA independently of L5 and L18.

Functionally, this is one of the proteins that binds to the 5S RNA in the ribosome where it forms part of the central protuberance. The sequence is that of Large ribosomal subunit protein bL25 from Wolbachia sp. subsp. Brugia malayi (strain TRS).